Reading from the N-terminus, the 453-residue chain is Tryptophan biosynthesis protein TrpCF (453 aa).

An indole-3-glycerol phosphate synthase region spans residues 1 to 257 (MMQTVLAKIV…AAVRRVLLGE (257 aa)). The interval 258 to 453 (NKVCGLTRGQ…ASVFQTLRAY (196 aa)) is N-(5'-phosphoribosyl)anthranilate isomerase.

The protein in the N-terminal section; belongs to the TrpC family. It in the C-terminal section; belongs to the TrpF family. Monomer.

It catalyses the reaction N-(5-phospho-beta-D-ribosyl)anthranilate = 1-(2-carboxyphenylamino)-1-deoxy-D-ribulose 5-phosphate. The enzyme catalyses 1-(2-carboxyphenylamino)-1-deoxy-D-ribulose 5-phosphate + H(+) = (1S,2R)-1-C-(indol-3-yl)glycerol 3-phosphate + CO2 + H2O. Its pathway is amino-acid biosynthesis; L-tryptophan biosynthesis; L-tryptophan from chorismate: step 3/5. It participates in amino-acid biosynthesis; L-tryptophan biosynthesis; L-tryptophan from chorismate: step 4/5. Its function is as follows. Bifunctional enzyme that catalyzes two sequential steps of tryptophan biosynthetic pathway. The first reaction is catalyzed by the isomerase, coded by the TrpF domain; the second reaction is catalyzed by the synthase, coded by the TrpC domain. The sequence is that of Tryptophan biosynthesis protein TrpCF (trpC) from Escherichia coli (strain K12).